Consider the following 513-residue polypeptide: Xylose import ATP-binding protein XylG (513 aa).

ABC transporter domains lie at 5–242 (LEMK…VGRE) and 259–505 (LRIE…LRSE). 37–44 (GENGSGKS) contacts ATP.

Belongs to the ABC transporter superfamily. Xylose importer (TC 3.A.1.2.4) family. As to quaternary structure, the complex is composed of two ATP-binding proteins (XylG), two transmembrane proteins (XylH) and a solute-binding protein (XylF).

It localises to the cell inner membrane. The catalysed reaction is D-xylose(out) + ATP + H2O = D-xylose(in) + ADP + phosphate + H(+). Its function is as follows. Part of the ABC transporter complex XylFGH involved in xylose import. Responsible for energy coupling to the transport system. This is Xylose import ATP-binding protein XylG from Shigella boydii serotype 4 (strain Sb227).